We begin with the raw amino-acid sequence, 364 residues long: tRNA 2-selenouridine synthase (364 aa).

The Rhodanese domain maps to 14–137 (LLADTPLIDV…LRQTAIQATW (124 aa)). Cysteine 97 acts as the S-selanylcysteine intermediate in catalysis.

Belongs to the SelU family. Monomer.

It carries out the reaction 5-methylaminomethyl-2-thiouridine(34) in tRNA + selenophosphate + (2E)-geranyl diphosphate + H2O + H(+) = 5-methylaminomethyl-2-selenouridine(34) in tRNA + (2E)-thiogeraniol + phosphate + diphosphate. The catalysed reaction is 5-methylaminomethyl-2-thiouridine(34) in tRNA + (2E)-geranyl diphosphate = 5-methylaminomethyl-S-(2E)-geranyl-thiouridine(34) in tRNA + diphosphate. It catalyses the reaction 5-methylaminomethyl-S-(2E)-geranyl-thiouridine(34) in tRNA + selenophosphate + H(+) = 5-methylaminomethyl-2-(Se-phospho)selenouridine(34) in tRNA + (2E)-thiogeraniol. The enzyme catalyses 5-methylaminomethyl-2-(Se-phospho)selenouridine(34) in tRNA + H2O = 5-methylaminomethyl-2-selenouridine(34) in tRNA + phosphate. Functionally, involved in the post-transcriptional modification of the uridine at the wobble position (U34) of tRNA(Lys), tRNA(Glu) and tRNA(Gln). Catalyzes the conversion of 2-thiouridine (S2U-RNA) to 2-selenouridine (Se2U-RNA). Acts in a two-step process involving geranylation of 2-thiouridine (S2U) to S-geranyl-2-thiouridine (geS2U) and subsequent selenation of the latter derivative to 2-selenouridine (Se2U) in the tRNA chain. The sequence is that of tRNA 2-selenouridine synthase from Salmonella heidelberg (strain SL476).